Reading from the N-terminus, the 38-residue chain is ITCGQVTSQVAGCLSYLQRGGAPAPXXXXGIRNLXXMA.

This sequence belongs to the plant LTP family.

Possesses potent antifungal activity against F.graminearum but not P.infestans. This Malva parviflora (Little mallow) protein is Antifungal protein 5.